The following is a 258-amino-acid chain: Chymotrypsin-like elastase family member 1 (258 aa).

The N-terminal stretch at 1–8 is a signal peptide; that stretch reads MLVLYGHS. Positions 9-18 are cleaved as a propeptide — activation peptide; it reads TQDVPETNAR. In terms of domain architecture, Peptidase S1 spans 19–256; it reads VVGGTEARRN…YITWINNVIA (238 aa). Cys-48 and Cys-64 are disulfide-bonded. His-63 serves as the catalytic Charge relay system. Ca(2+) contacts are provided by Glu-77, Asn-79, Gln-82, and Glu-87. The N-linked (GlcNAc...) asparagine glycan is linked to Asn-79. The active-site Charge relay system is Asp-111. Disulfide bonds link Cys-145–Cys-212, Cys-176–Cys-192, and Cys-202–Cys-232. Catalysis depends on Ser-206, which acts as the Charge relay system. An N-linked (GlcNAc...) asparagine glycan is attached at Asn-233.

Belongs to the peptidase S1 family. Elastase subfamily. Requires Ca(2+) as cofactor.

The protein resides in the secreted. It catalyses the reaction Hydrolysis of proteins, including elastin. Preferential cleavage: Ala-|-Xaa.. Serine proteases that hydrolyze many proteins in addition to elastin. This is Chymotrypsin-like elastase family member 1 (CELA1) from Canis lupus familiaris (Dog).